Consider the following 268-residue polypeptide: Eukaryotic translation initiation factor 3 subunit J (268 aa).

3 disordered regions span residues 1-27 (MSWD…DDEF), 40-63 (DAEE…KVDK), and 217-249 (LAKV…KKDQ). Positions 47-58 (QKQKPKAAPKAA) are enriched in basic residues. Residues 191-221 (IESIRQTVATLNVLIKEKERQERQARLAKVK) are a coiled coil.

Belongs to the eIF-3 subunit J family. As to quaternary structure, component of the eukaryotic translation initiation factor 3 (eIF-3) complex.

The protein localises to the cytoplasm. In terms of biological role, component of the eukaryotic translation initiation factor 3 (eIF-3) complex, which is involved in protein synthesis of a specialized repertoire of mRNAs and, together with other initiation factors, stimulates binding of mRNA and methionyl-tRNAi to the 40S ribosome. The eIF-3 complex specifically targets and initiates translation of a subset of mRNAs involved in cell proliferation. This chain is Eukaryotic translation initiation factor 3 subunit J, found in Eremothecium gossypii (strain ATCC 10895 / CBS 109.51 / FGSC 9923 / NRRL Y-1056) (Yeast).